A 940-amino-acid polypeptide reads, in one-letter code: UvrABC system protein A (940 aa).

Position 32–39 (32–39) interacts with ATP; it reads GLSGSGKS. The C4-type zinc-finger motif lies at 252–279; that stretch reads CIDCGISIDEISPRLFSFNSPFGKCDYC. 2 ABC transporter domains span residues 309–589 and 609–937; these read WANT…EGSL and SNGK…HYLK. Position 641 to 648 (641 to 648) interacts with ATP; the sequence is GVSGSGKS. A C4-type zinc finger spans residues 740–766; the sequence is CEACKGDGIIKIEMQFLSDVYVPCEIC.

The protein belongs to the ABC transporter superfamily. UvrA family. In terms of assembly, forms a heterotetramer with UvrB during the search for lesions.

The protein localises to the cytoplasm. The UvrABC repair system catalyzes the recognition and processing of DNA lesions. UvrA is an ATPase and a DNA-binding protein. A damage recognition complex composed of 2 UvrA and 2 UvrB subunits scans DNA for abnormalities. When the presence of a lesion has been verified by UvrB, the UvrA molecules dissociate. The protein is UvrABC system protein A of Clostridium tetani (strain Massachusetts / E88).